Here is a 142-residue protein sequence, read N- to C-terminus: Large ribosomal subunit protein uL13 (142 aa).

The protein belongs to the universal ribosomal protein uL13 family. Part of the 50S ribosomal subunit.

In terms of biological role, this protein is one of the early assembly proteins of the 50S ribosomal subunit, although it is not seen to bind rRNA by itself. It is important during the early stages of 50S assembly. The chain is Large ribosomal subunit protein uL13 from Alteromonas mediterranea (strain DSM 17117 / CIP 110805 / LMG 28347 / Deep ecotype).